We begin with the raw amino-acid sequence, 488 residues long: Probable glycine dehydrogenase (decarboxylating) subunit 2 (488 aa).

An N6-(pyridoxal phosphate)lysine modification is found at lysine 274.

The protein belongs to the GcvP family. C-terminal subunit subfamily. The glycine cleavage system is composed of four proteins: P, T, L and H. In this organism, the P 'protein' is a heterodimer of two subunits. Pyridoxal 5'-phosphate serves as cofactor.

The catalysed reaction is N(6)-[(R)-lipoyl]-L-lysyl-[glycine-cleavage complex H protein] + glycine + H(+) = N(6)-[(R)-S(8)-aminomethyldihydrolipoyl]-L-lysyl-[glycine-cleavage complex H protein] + CO2. In terms of biological role, the glycine cleavage system catalyzes the degradation of glycine. The P protein binds the alpha-amino group of glycine through its pyridoxal phosphate cofactor; CO(2) is released and the remaining methylamine moiety is then transferred to the lipoamide cofactor of the H protein. The polypeptide is Probable glycine dehydrogenase (decarboxylating) subunit 2 (Listeria monocytogenes serovar 1/2a (strain ATCC BAA-679 / EGD-e)).